The following is a 125-amino-acid chain: MLVIFLGILGLLANQVFGLPAKNAGHLYSTENPPEEELGFWCTYMESCRFCWDCEHGICKNKVNESMPWIIENSYLTTCAVSRWYDQCMYEEGNAKHYHTMDCSNPVPHNRPHRLGMKIYEREDL.

At 1 to 6 (MLVIFL) the chain is on the cytoplasmic side. A helical transmembrane segment spans residues 7–27 (GILGLLANQVFGLPAKNAGHL). The Extracellular portion of the chain corresponds to 28–116 (YSTENPPEEE…VPHNRPHRLG (89 aa)). Asn-64 carries an N-linked (GlcNAc...) asparagine; by host glycan.

Belongs to the asfivirus MGF 110 family.

The protein resides in the host membrane. Plays a role in virus cell tropism, and may be required for efficient virus replication in macrophages. This is Protein MGF 110-3L from African swine fever virus (isolate Pig/Kenya/KEN-50/1950) (ASFV).